A 413-amino-acid chain; its full sequence is Ras association domain-containing protein 5 (413 aa).

Positions 1 to 103 (MASPAIGQRP…RPRDVRSIFE (103 aa)) are disordered. Basic and acidic residues predominate over residues 52-74 (SEDRGGRRSGRRDPEPTPRDCRH). Residues 117–165 (GHRFVELALRGGPGWCDLCGREVLRQALRCANCKFTCHSECRSLIQLDC) form a Phorbol-ester/DAG-type zinc finger. S177 and S274 each carry phosphoserine. Positions 265–359 (PAATTDKRTS…LSFVLKENET (95 aa)) constitute a Ras-associating domain. The residue at position 347 (T347) is a Phosphothreonine. Residues 361–408 (EVEWDAFSIPELQNFLTILEKEEQDKIHQLQKKYNKFRQKLEEALRES) enclose the SARAH domain.

As to quaternary structure, interacts directly with activated HRAS; a RASSF5-STK4/MST1 complex probably associates with activated HRAS. Interacts with KRAS. Probably interacts with Ras-like GTPases RRAS, MRAS, RAP1B, RAP2A and RALA. Interacts with RRAS2. Can self-associate. Interacts with RSSF1 isoform A. The RSSF1 isoform A-RSSF5 heterodimer probably mediates the association of RSSF1 with HRAS. Isoform 2 interacts with activated RAP1A and ITGAL/LFA-1. Binds STK4/MST1, inhibiting STK4/MST1 autoactivation.

The protein localises to the cytoplasm. Its subcellular location is the cytoskeleton. Potential tumor suppressor. Seems to be involved in lymphocyte adhesion by linking RAP1A activation upon T-cell receptor or chemokine stimulation to integrin activation. Isoform 2 stimulates lymphocyte polarization and the patch-like distribution of ITGAL/LFA-1, resulting in an enhanced adhesion to ICAM1. Together with RAP1A may participate in regulation of microtubule growth. The association of isoform 2 with activated RAP1A is required for directional movement of endothelial cells during wound healing. May be involved in regulation of Ras apoptotic function. The RASSF5-STK4/MST1 complex may mediate HRAS and KRAS induced apoptosis. The sequence is that of Ras association domain-containing protein 5 (Rassf5) from Mus musculus (Mouse).